A 570-amino-acid polypeptide reads, in one-letter code: Proline--tRNA ligase (570 aa).

The protein belongs to the class-II aminoacyl-tRNA synthetase family. ProS type 1 subfamily. In terms of assembly, homodimer.

The protein resides in the cytoplasm. The catalysed reaction is tRNA(Pro) + L-proline + ATP = L-prolyl-tRNA(Pro) + AMP + diphosphate. In terms of biological role, catalyzes the attachment of proline to tRNA(Pro) in a two-step reaction: proline is first activated by ATP to form Pro-AMP and then transferred to the acceptor end of tRNA(Pro). As ProRS can inadvertently accommodate and process non-cognate amino acids such as alanine and cysteine, to avoid such errors it has two additional distinct editing activities against alanine. One activity is designated as 'pretransfer' editing and involves the tRNA(Pro)-independent hydrolysis of activated Ala-AMP. The other activity is designated 'posttransfer' editing and involves deacylation of mischarged Ala-tRNA(Pro). The misacylated Cys-tRNA(Pro) is not edited by ProRS. This Shewanella pealeana (strain ATCC 700345 / ANG-SQ1) protein is Proline--tRNA ligase.